The primary structure comprises 655 residues: D-xylonate dehydratase YjhG (655 aa).

It belongs to the IlvD/Edd family.

The catalysed reaction is D-xylonate = 2-dehydro-3-deoxy-D-arabinonate + H2O. Its activity is regulated as follows. Activity is increased in the presence of Mn(+) and Mg(2+). Inhibited by thiol compounds. Functionally, catalyzes the dehydration of D-xylonic acid to form 2-dehydro-3-deoxy-D-pentonate. The sequence is that of D-xylonate dehydratase YjhG (yjhG) from Escherichia coli (strain K12).